A 605-amino-acid polypeptide reads, in one-letter code: Copper resistance protein A (605 aa).

Positions 1–41 form a signal peptide, tat-type signal; sequence MLLKTSRRTFLKGLTLSGVAGSLGVWSFNARSSLSLPVAAS. Cu cation-binding residues include His100, His102, His142, and His144. 3 repeat units span residues 382–389, 414–421, and 422–429. Positions 382-429 are 3 X 8 AA tandem repeats of D-H-X-X-M-X-G-M; the sequence is DHSQMGGMDNSGEMMSMDGADLPDSGTSSAPMDHSSMAGMDHSRMAGM. Positions 538, 541, 543, 586, 587, 588, 592, and 597 each coordinate Cu cation.

It belongs to the multicopper oxidase family. CopA subfamily. Predicted to be exported by the Tat system. The position of the signal peptide cleavage has not been experimentally proven.

The protein resides in the periplasm. In terms of biological role, required for the copper-inducible expression of copper resistance. May have oxidase activity. The polypeptide is Copper resistance protein A (pcoA) (Escherichia coli).